A 553-amino-acid chain; its full sequence is Putative ABC transporter ATP-binding protein BCE_3323 (553 aa).

2 consecutive ABC transporter domains span residues 7 to 245 (AEIN…FRPF) and 295 to 527 (LSAE…SINR). ATP contacts are provided by residues 41–48 (GGSGSGKT) and 329–336 (GKNGTGKS).

It belongs to the ABC transporter superfamily.

It is found in the cell membrane. Probably part of an ABC transporter complex. Responsible for energy coupling to the transport system. In Bacillus cereus (strain ATCC 10987 / NRS 248), this protein is Putative ABC transporter ATP-binding protein BCE_3323.